A 533-amino-acid chain; its full sequence is Peptidyl-prolyl cis-trans isomerase-like 2 (533 aa).

The region spanning 38–111 (KRLPFYCCSL…DEYFCPVTYK (74 aa)) is the U-box domain. Residues 284–438 (KKSYARIITN…REIKIKQIQM (155 aa)) enclose the PPIase cyclophilin-type domain. Residues 443 to 519 (FEEYQRRLKN…SNEGEELQKK (77 aa)) adopt a coiled-coil conformation. The span at 454–477 (LTHEANAERENEEMRKRREKEEKM) shows a compositional bias: basic and acidic residues. The tract at residues 454–533 (LTHEANAERE…KTTFGNFDNF (80 aa)) is disordered. Polar residues predominate over residues 523 to 533 (TKTTFGNFDNF).

Belongs to the cyclophilin-type PPIase family. PPIL2 subfamily.

It localises to the nucleus. The catalysed reaction is [protein]-peptidylproline (omega=180) = [protein]-peptidylproline (omega=0). The enzyme catalyses S-ubiquitinyl-[E2 ubiquitin-conjugating enzyme]-L-cysteine + [acceptor protein]-L-lysine = [E2 ubiquitin-conjugating enzyme]-L-cysteine + N(6)-ubiquitinyl-[acceptor protein]-L-lysine.. It functions in the pathway protein modification; protein ubiquitination. May catalyze the cis-trans isomerization of proline imidic peptide bonds in oligopeptides thereby assisting the folding of proteins. May also function as a chaperone, playing a role in intracellular transport of proteins. May also have a protein ubiquitin ligase activity acting as an E3 ubiquitin protein ligase or as a ubiquitin-ubiquitin ligase promoting elongation of ubiquitin chains on proteins. This is Peptidyl-prolyl cis-trans isomerase-like 2 (cyp14) from Rhizopus delemar (strain RA 99-880 / ATCC MYA-4621 / FGSC 9543 / NRRL 43880) (Mucormycosis agent).